The chain runs to 199 residues: Elongation factor Ts (199 aa).

An involved in Mg(2+) ion dislocation from EF-Tu region spans residues 81–84 (TDFV).

The protein belongs to the EF-Ts family.

It localises to the cytoplasm. Associates with the EF-Tu.GDP complex and induces the exchange of GDP to GTP. It remains bound to the aminoacyl-tRNA.EF-Tu.GTP complex up to the GTP hydrolysis stage on the ribosome. This chain is Elongation factor Ts, found in Thermotoga petrophila (strain ATCC BAA-488 / DSM 13995 / JCM 10881 / RKU-1).